The primary structure comprises 300 residues: Glucose and ribitol dehydrogenase homolog (300 aa).

Polar residues predominate over residues 1 to 14 (MASQQFPPQNQETQ). The disordered stretch occupies residues 1–23 (MASQQFPPQNQETQPGKEHAMDP). Position 44 to 68 (44 to 68 (IVTGGDSGIGRAVCLCFALEGATVA)) interacts with NAD(+). Position 192 (Ser192) interacts with substrate. Tyr205 acts as the Proton acceptor in catalysis.

The protein belongs to the short-chain dehydrogenases/reductases (SDR) family.

Its function is as follows. May act as a short alcohol-polyol-sugar dehydrogenase possibly related to carbohydrate metabolism and the acquisition of desiccation tolerance. May also be involved in signal transduction. This is Glucose and ribitol dehydrogenase homolog from Oryza sativa subsp. japonica (Rice).